The primary structure comprises 237 residues: DNA repair protein RecO (237 aa).

This sequence belongs to the RecO family.

Functionally, involved in DNA repair and RecF pathway recombination. The protein is DNA repair protein RecO of Actinobacillus succinogenes (strain ATCC 55618 / DSM 22257 / CCUG 43843 / 130Z).